We begin with the raw amino-acid sequence, 318 residues long: Glycine--tRNA ligase alpha subunit (318 aa).

This sequence belongs to the class-II aminoacyl-tRNA synthetase family. As to quaternary structure, tetramer of two alpha and two beta subunits.

It is found in the cytoplasm. It carries out the reaction tRNA(Gly) + glycine + ATP = glycyl-tRNA(Gly) + AMP + diphosphate. The protein is Glycine--tRNA ligase alpha subunit of Saccharophagus degradans (strain 2-40 / ATCC 43961 / DSM 17024).